We begin with the raw amino-acid sequence, 446 residues long: Tubulin beta chain (446 aa).

GTP-binding residues include Gln11, Glu69, Ser138, Gly142, Thr143, Gly144, Asn204, and Asn226. A Mg(2+)-binding site is contributed by Glu69. The segment at 423–446 (QQYQDATADEEEGEYEEEPAEEEQ) is disordered. Residues 429-446 (TADEEEGEYEEEPAEEEQ) are compositionally biased toward acidic residues.

The protein belongs to the tubulin family. Dimer of alpha and beta chains. A typical microtubule is a hollow water-filled tube with an outer diameter of 25 nm and an inner diameter of 15 nM. Alpha-beta heterodimers associate head-to-tail to form protofilaments running lengthwise along the microtubule wall with the beta-tubulin subunit facing the microtubule plus end conferring a structural polarity. Microtubules usually have 13 protofilaments but different protofilament numbers can be found in some organisms and specialized cells. The cofactor is Mg(2+).

The protein localises to the cytoplasm. It localises to the cytoskeleton. In terms of biological role, tubulin is the major constituent of microtubules, a cylinder consisting of laterally associated linear protofilaments composed of alpha- and beta-tubulin heterodimers. Microtubules grow by the addition of GTP-tubulin dimers to the microtubule end, where a stabilizing cap forms. Below the cap, tubulin dimers are in GDP-bound state, owing to GTPase activity of alpha-tubulin. This chain is Tubulin beta chain, found in Pleurotus sajor-caju (Oyster mushroom).